Here is a 748-residue protein sequence, read N- to C-terminus: Catalase-peroxidase (748 aa).

Residues tryptophan 91 to tyrosine 242 constitute a cross-link (tryptophyl-tyrosyl-methioninium (Trp-Tyr) (with M-268)). The active-site Proton acceptor is the histidine 92. The segment at aspartate 194 to alanine 223 is disordered. A cross-link (tryptophyl-tyrosyl-methioninium (Tyr-Met) (with W-91)) is located at residues tyrosine 242–methionine 268. A heme b-binding site is contributed by histidine 283. The interval threonine 288–glycine 310 is disordered. Over residues glycine 290–proline 301 the composition is skewed to basic and acidic residues.

The protein belongs to the peroxidase family. Peroxidase/catalase subfamily. Homodimer or homotetramer. Heme b serves as cofactor. In terms of processing, formation of the three residue Trp-Tyr-Met cross-link is important for the catalase, but not the peroxidase activity of the enzyme.

It carries out the reaction H2O2 + AH2 = A + 2 H2O. It catalyses the reaction 2 H2O2 = O2 + 2 H2O. Its function is as follows. Bifunctional enzyme with both catalase and broad-spectrum peroxidase activity. This is Catalase-peroxidase from Herbaspirillum seropedicae.